Here is a 490-residue protein sequence, read N- to C-terminus: Serine/threonine-protein kinase BSK6 (490 aa).

Gly-2 is lipidated: N-myristoyl glycine. The residue at position 25 (Ser-25) is a Phosphoserine. Residues 56–310 (DNIVSEHGEK…KSLVTSLVTL (255 aa)) enclose the Protein kinase domain. Residues 62–70 (HGEKAPNVV) and Lys-84 contribute to the ATP site. The active-site Proton acceptor is the Asp-178. Ser-373 bears the Phosphoserine mark.

It belongs to the protein kinase superfamily. Ser/Thr protein kinase family. As to quaternary structure, interacts with BRI1, ASK7/BIN2, ASK9/BIL2, BSK1, BSK5, BSK8 and BSK11. Post-translationally, phosphorylated by BRI1, ASK7/BIN2 and ASK9/BIL2.

It is found in the cell membrane. The catalysed reaction is L-seryl-[protein] + ATP = O-phospho-L-seryl-[protein] + ADP + H(+). It carries out the reaction L-threonyl-[protein] + ATP = O-phospho-L-threonyl-[protein] + ADP + H(+). In terms of biological role, probable serine/threonine kinase that acts as a positive regulator of brassinosteroid (BR) signaling downstream of the receptor kinase BRI1. Functions redundantly with BSK3, BSK4, BSK7 and BSK8. The polypeptide is Serine/threonine-protein kinase BSK6 (Arabidopsis thaliana (Mouse-ear cress)).